The chain runs to 993 residues: Replication protein 1a (993 aa).

A methyltransferase region spans residues 51–409 (NVLGVKDSEV…TIVINGMSMQ (359 aa)). The region spanning 72-290 (HLTQQEFAPH…HDWENIRSFL (219 aa)) is the Alphavirus-like MT domain. The interval 543-576 (EVSDRPEAPSPTPDDPADVCGKEQEVSELDSLSA) is disordered. A (+)RNA virus helicase ATP-binding domain is found at 684–838 (NSECVVCNNE…KIIPDETSDA (155 aa)). The segment at 712-975 (VDGVAGCGKT…LTRHKVTFRY (264 aa)) is ATP-dependent helicase. 714-721 (GVAGCGKT) provides a ligand contact to ATP. Positions 839–993 (DTTFRSPQDV…DLIAECIARA (155 aa)) constitute a (+)RNA virus helicase C-terminal domain.

This sequence belongs to the bromoviridae replication protein 1a family. As to quaternary structure, interacts with RNA-directed RNA polymerase 2a.

It is found in the host endoplasmic reticulum membrane. In terms of biological role, involved in the virus replication. Contains a helicase domain and a methyltransferase domain. The methyltransferase domain is probably involved in viral RNA capping. Involved in the formation of ER membrane spherular invaginations in which RNA replication complexes form. The protein is Replication protein 1a of Cucumber mosaic virus (strain Ixora) (CMV).